Consider the following 1029-residue polypeptide: Protein STABILIZED1 (1029 aa).

The region spanning 1–85 is the Ubiquitin-like domain; the sequence is MVFLSIPNGK…VIIHVLLLGG (85 aa). A Glycyl lysine isopeptide (Gly-Lys) (interchain with K-? in acceptor proteins) cross-link involves residue glycine 85. The interval 142 to 170 is disordered; sequence AAPGVGRGAGKPSEAEAEDDEEAEEKRYD. Residues 210 to 243 are a coiled coil; that stretch reads DSRRKDRREAKLKEEIEKYRASNPKITEQFADLK. HAT repeat units follow at residues 367–399, 401–431, 432–462, 463–494, 496–524, 526–554, 639–671, 673–705, 707–739, 741–772, 774–806, 808–840, 842–874, 876–908, and 940–972; these read YDRN…VEEV, GKIK…CRLA, NPED…KLEH, DVEN…LANE, DARI…LETY, ESKK…LEEA, GSIE…LEKS, GSRE…EKWL, GDVP…LEFE, KEPE…VERE, GNVE…LEER, KHLE…LEEK, NGLN…AELR, DNKR…MAPR, and KKVE…FELQ. Residues 625 to 658 form a TPR 1 repeat; the sequence is KRTWVADADECKKRGSIETARAIYAHALSVFLTK. Residues 794–827 form a TPR 2 repeat; sequence FKLWLMLGQLEERFKHLEQARKAYDTGLKHCPHC. One copy of the TPR 3 repeat lies at 926-959; it reads PHVTIAVAKLFWQDKKVEKARAWFERAVTVGPDI.

Component of a pre-mRNA splicing complex. Interacts with ZOP1. Interacts with PRP31. Ubiquitous.

It is found in the nucleus. The protein resides in the cajal body. In terms of biological role, pre-mRNA splicing factor required for splicing and for the turnover of unstable transcripts. May be a U5 snRNP-associated protein involved in the formation of U4/U6-U5 tri-snRNP. Involved in responses to abiotic stresses. Involved in microRNAs (miRNAs) biogenesis by functioning in primary miRNAs (pri-miRNAs) splicing. Required for DNA methylation and transcriptional silencing through the RNA-directed DNA methylation (RdDM) pathway. The protein is Protein STABILIZED1 (STA1) of Arabidopsis thaliana (Mouse-ear cress).